Reading from the N-terminus, the 2152-residue chain is Oxygen-regulated protein 1 (2152 aa).

The segment covering 1–19 (MSDTPSTGFSIIHPTSSED) has biased composition (polar residues). Residues 1–25 (MSDTPSTGFSIIHPTSSEDQVPPPR) are disordered. Doublecortin domains follow at residues 36–118 (KRIS…VDLD) and 154–233 (RSLV…GNYD). Disordered stretches follow at residues 353-375 (VSKT…RTES), 1435-1455 (DMEE…MTSS), and 1587-1616 (DWSD…ELAQ).

As to quaternary structure, interacts (via the doublecortin domains) with microtubules. Interacts with RP1L1. Interacts with MAK.

Its subcellular location is the cytoplasm. The protein resides in the cytoskeleton. It is found in the cilium axoneme. The protein localises to the cell projection. It localises to the cilium. Its subcellular location is the photoreceptor outer segment. Microtubule-associated protein regulating the stability and length of the microtubule-based axoneme of photoreceptors. Required for the differentiation of photoreceptor cells, it plays a role in the organization of the outer segment of rod and cone photoreceptors ensuring the correct orientation and higher-order stacking of outer segment disks along the photoreceptor axoneme. This is Oxygen-regulated protein 1 (RP1) from Papio hamadryas (Hamadryas baboon).